Reading from the N-terminus, the 267-residue chain is Short chain dehydrogenase claC (267 aa).

Positions 27, 73, 100, and 133 each coordinate NADP(+). Active-site proton donor residues include Ser-149 and Ser-150. Residues Tyr-164, Lys-168, and Thr-199 each coordinate NADP(+). Tyr-164 functions as the Proton acceptor in the catalytic mechanism. The Lowers pKa of active site Tyr role is filled by Lys-168.

The protein belongs to the short-chain dehydrogenases/reductases (SDR) family.

The protein operates within pigment biosynthesis. Its function is as follows. Non-reducing polyketide synthase; part of the gene cluster that mediates the biosynthesis of the bianthraquinone cladofulvin, a conidial pigment not required for virulence but that plays a role in fitness and resistance to environmental stresses including UV light and low-temperature stress. The pathway begins with the synthesis of atrochrysone thioester by the polyketide synthase (PKS) claG. The atrochrysone carboxyl ACP thioesterase claF then breaks the thioester bond and releases the atrochrysone carboxylic acid from claG. This compound is decarboxylated by claH to yield emodin, which is further converted to chrysophanol hydroquinone by the reductase claC and the dehydratase claB. The cytochrome monooxygenase P450 claM then catalyzes the dimerization of nataloe-emodin to cladofulvin. This Passalora fulva (Tomato leaf mold) protein is Short chain dehydrogenase claC.